A 355-amino-acid chain; its full sequence is Probable dual-specificity RNA methyltransferase RlmN (355 aa).

Residues 1–20 (MSATPVTQLTPSSQPQQPCS) are disordered. The Proton acceptor role is filled by E107. The region spanning 113–341 (TDKRLTVCVS…VSVRYSRGLE (229 aa)) is the Radical SAM core domain. C120 and C346 are oxidised to a cystine. Positions 127, 131, and 134 each coordinate [4Fe-4S] cluster. Residues 174 to 175 (GE), S204, 227 to 229 (SLH), and N303 each bind S-adenosyl-L-methionine. The active-site S-methylcysteine intermediate is the C346.

Belongs to the radical SAM superfamily. RlmN family. Requires [4Fe-4S] cluster as cofactor.

It localises to the cytoplasm. It carries out the reaction adenosine(2503) in 23S rRNA + 2 reduced [2Fe-2S]-[ferredoxin] + 2 S-adenosyl-L-methionine = 2-methyladenosine(2503) in 23S rRNA + 5'-deoxyadenosine + L-methionine + 2 oxidized [2Fe-2S]-[ferredoxin] + S-adenosyl-L-homocysteine. The enzyme catalyses adenosine(37) in tRNA + 2 reduced [2Fe-2S]-[ferredoxin] + 2 S-adenosyl-L-methionine = 2-methyladenosine(37) in tRNA + 5'-deoxyadenosine + L-methionine + 2 oxidized [2Fe-2S]-[ferredoxin] + S-adenosyl-L-homocysteine. Its function is as follows. Specifically methylates position 2 of adenine 2503 in 23S rRNA and position 2 of adenine 37 in tRNAs. The chain is Probable dual-specificity RNA methyltransferase RlmN from Nostoc sp. (strain PCC 7120 / SAG 25.82 / UTEX 2576).